The chain runs to 563 residues: MAEASQLFKEFKIQSVSEFFRRNAAMLGYTGKIRSLTTVVHEAVTNSLDACEEAGILPYVRVEIEELGREHYKVIVEDNGPGIPEKFITHVFGKMLAGTKAHRNIQSRGQQGIGISGAVMFAQITSGKATRVITSTGGDIIEAWVKIDVDKNEGKIVKKERHPNPKGWRGTRIELEVKNVRYVRSKQGVYWYLKLTAIANPHAHIELIEPDGKLIVFPRSSEEVPKPPVEMKPHPKGVLTDDVYRMAKKTRRNTVRRFLIGEFSRISDKKVDELIKYIAALRLIKTEKDKAVQDQLYERLMNGEVDKVLRSFKGYTKVVKQVAKLMEKPPEKLSWHEAEEIVEAFKYMKFLAPPTHGLRPIGEENIEKGLKGILKPEFVTAVTRPPKVYSGGIPFQVEVGLAYGGEISSGFDLLRYANRVPLLFDAGSCVTTLAARSIDWKRYKVDDLERAPVVLMINVISVHVPYTGTGKQSIANVDEIHNEIRLAIMDAARRLQTYLSGKHRRLYQVKRKKTFEKYVPEIAKALSILTGEPEEEVKNYFLRFIEERFAQSEVEAEEVAENA.

Residues asparagine 46, aspartate 78, 99 to 100 (TK), 109 to 116 (GQQGIGIS), and lysine 471 contribute to the ATP site.

It belongs to the TOP6B family. Homodimer. Heterotetramer of two Top6A and two Top6B chains.

The enzyme catalyses ATP-dependent breakage, passage and rejoining of double-stranded DNA.. Relaxes both positive and negative superturns and exhibits a strong decatenase activity. This chain is Type 2 DNA topoisomerase 6 subunit B, found in Thermococcus onnurineus (strain NA1).